Here is a 112-residue protein sequence, read N- to C-terminus: Small ribosomal subunit protein bS6 (112 aa).

This sequence belongs to the bacterial ribosomal protein bS6 family.

In terms of biological role, binds together with bS18 to 16S ribosomal RNA. This is Small ribosomal subunit protein bS6 from Legionella pneumophila (strain Paris).